The following is a 136-amino-acid chain: Large ribosomal subunit protein uL16 (136 aa).

It belongs to the universal ribosomal protein uL16 family. As to quaternary structure, part of the 50S ribosomal subunit.

Its function is as follows. Binds 23S rRNA and is also seen to make contacts with the A and possibly P site tRNAs. The sequence is that of Large ribosomal subunit protein uL16 from Orientia tsutsugamushi (strain Ikeda) (Rickettsia tsutsugamushi).